A 506-amino-acid chain; its full sequence is Maturase K (506 aa).

The protein belongs to the intron maturase 2 family. MatK subfamily.

Its subcellular location is the plastid. It localises to the chloroplast. Usually encoded in the trnK tRNA gene intron. Probably assists in splicing its own and other chloroplast group II introns. In Jasminum nudiflorum (Winter jasmine), this protein is Maturase K.